Here is a 348-residue protein sequence, read N- to C-terminus: N-acetyl-gamma-glutamyl-phosphate reductase (348 aa).

Residue Cys149 is part of the active site.

The protein belongs to the NAGSA dehydrogenase family. Type 1 subfamily.

It is found in the cytoplasm. It catalyses the reaction N-acetyl-L-glutamate 5-semialdehyde + phosphate + NADP(+) = N-acetyl-L-glutamyl 5-phosphate + NADPH + H(+). Its pathway is amino-acid biosynthesis; L-arginine biosynthesis; N(2)-acetyl-L-ornithine from L-glutamate: step 3/4. Functionally, catalyzes the NADPH-dependent reduction of N-acetyl-5-glutamyl phosphate to yield N-acetyl-L-glutamate 5-semialdehyde. The chain is N-acetyl-gamma-glutamyl-phosphate reductase from Cellvibrio japonicus (strain Ueda107) (Pseudomonas fluorescens subsp. cellulosa).